The chain runs to 88 residues: Small ribosomal subunit protein bS16c (88 aa).

This sequence belongs to the bacterial ribosomal protein bS16 family.

It is found in the plastid. The protein resides in the chloroplast. This Atropa belladonna (Belladonna) protein is Small ribosomal subunit protein bS16c.